The chain runs to 896 residues: Desmocollin-3 (896 aa).

Positions Met-1–Ala-31 are cleaved as a signal peptide. Residues Cys-32 to Arg-135 constitute a propeptide that is removed on maturation. Cadherin domains are found at residues Arg-136–Phe-243, Thr-244–Phe-355, Arg-356–Cys-472, Lys-473–Gln-580, and Asp-581–Lys-691. Topologically, residues Arg-136 to Leu-695 are extracellular. N-linked (GlcNAc...) asparagine glycosylation is present at Asn-166. Residues Asn-392 and Asn-547 are each glycosylated (N-linked (GlcNAc...) asparagine). N-linked (GlcNAc...) (high mannose) asparagine glycosylation occurs at Asn-630. The chain crosses the membrane as a helical span at residues Ala-696–Val-716. The Cytoplasmic segment spans residues Thr-717–Arg-896.

May form homodimers. Interacts with DSG1; there is evidence to suggest that the interaction promotes cell-cell adhesion of keratinocytes. As to expression, expressed in the basal layers of epidermal stratified epithelia from birth (at protein level).

It is found in the cell membrane. The protein resides in the cell junction. The protein localises to the desmosome. It localises to the cytoplasm. In terms of biological role, a component of desmosome cell-cell junctions which are required for positive regulation of cellular adhesion. Required for cell-cell adhesion in the epidermis, as a result required for the maintenance of the dermal cohesion and the dermal barrier function. Required for cell-cell adhesion of epithelial cell layers surrounding the telogen hair club, as a result plays an important role in telogen hair shaft anchorage. Essential for successful completion of embryo compaction and development beyond the 8-cell stage. The polypeptide is Desmocollin-3 (Dsc3) (Mus musculus (Mouse)).